The sequence spans 268 residues: ClpXP adapter protein SpxH (268 aa).

It belongs to the SpxH family. As to quaternary structure, interacts with Spx.

The protein resides in the cytoplasm. Functionally, adapter protein required for efficient degradation of Spx by ClpXP under non-stress conditions. Interaction with Spx stabilizes Spx and exposes the C-terminus of Spx for recognition and proteolysis by ClpXP. This chain is ClpXP adapter protein SpxH, found in Staphylococcus aureus (strain Mu3 / ATCC 700698).